A 437-amino-acid chain; its full sequence is UDP-glucosyl transferase 79L3 (437 aa).

His-18 (proton acceptor) is an active-site residue. The Charge relay role is filled by Asp-117. UDP is bound by residues Ser-254, Trp-312, Val-313, His-330, Ser-335, and Glu-338.

This sequence belongs to the UDP-glycosyltransferase family. Mainly expressed in flowers, flower buds and young leaves, and, to a lesser extent, in old leaves, stems and roots.

It participates in secondary metabolite biosynthesis; terpenoid biosynthesis. Its function is as follows. Component of the oleanane-type triterpene saponins (e.g. saponarioside A and saponarioside B) biosynthetic pathway, leading to the production of natural products with detergent properties used as traditional sources of soap. A glycosyltransferase that mediates the conversion of QA-triFR to QA-triFRX via the elongation of the C-28 sugar chain with a D-xylose. This is UDP-glucosyl transferase 79L3 from Saponaria officinalis (Common soapwort).